The primary structure comprises 435 residues: MWRIWRCRLSFLFATGCLLGALTAGLGSQMSDSVGRNVQAPAGVADASQEAGDVVEERTERTEQQVFALGPPRRHSSESLFPRNASVTARRRRNRRIALIATAVGVAVILAALYVLRRRRAQPPQEPEPPTRLRTPRPRAPSGQQQPSESEPPAGVPMTPGFLTLPFTCLRDTKVTFFGPSGRQHGFTALYDPSPNKRVATVDAGTNRLFIGGGGMNGEFANTIIEEARRNRIPLTATELSAESQEIQERLLRDAERRPGTLVEIDSGRFSRVFARSFAYVAIVPNTVWDESETGKNVGATFLHILKPEVTPHGNQMNDVMLYTVAPLGNASDSAYNLAYKATMLGIVGAVSEYNKTPWGEVKPVEAIRLPLLGAGHFRGRRGLHSIGRANAVAVEAAITRFDPRVELQFMYEPSDAALRGLMESERTYTFPQGD.

A signal peptide spans Met1–Gly20. At Ala21–Arg96 the chain is on the vacuolar side. A helical membrane pass occupies residues Ile97 to Arg117. Residues Arg118–Asp435 are Cytoplasmic-facing. Residues Arg120–Thr159 form a disordered region.

As to quaternary structure, interacts with host SAMM50.

It localises to the parasitophorous vacuole membrane. In terms of biological role, during host cell infection by tachyzoites, does not play a role in tethering the parasitophorous vacuole to the host mitochondria, probably because it does not bind host mitochondrial import protein TOMM70. The chain is Mitochondrial association factor 1 form a1 from Toxoplasma gondii (strain ATCC 50611 / Me49).